The following is a 394-amino-acid chain: Phosphopentomutase (394 aa).

Mn(2+) contacts are provided by Asp-13, Asp-286, His-291, Asp-327, His-328, and His-339.

It belongs to the phosphopentomutase family. Mn(2+) serves as cofactor.

The protein resides in the cytoplasm. The catalysed reaction is 2-deoxy-alpha-D-ribose 1-phosphate = 2-deoxy-D-ribose 5-phosphate. It carries out the reaction alpha-D-ribose 1-phosphate = D-ribose 5-phosphate. It participates in carbohydrate degradation; 2-deoxy-D-ribose 1-phosphate degradation; D-glyceraldehyde 3-phosphate and acetaldehyde from 2-deoxy-alpha-D-ribose 1-phosphate: step 1/2. In terms of biological role, isomerase that catalyzes the conversion of deoxy-ribose 1-phosphate (dRib-1-P) and ribose 1-phosphate (Rib-1-P) to deoxy-ribose 5-phosphate (dRib-5-P) and ribose 5-phosphate (Rib-5-P), respectively. The protein is Phosphopentomutase of Bacillus thuringiensis (strain Al Hakam).